The sequence spans 558 residues: Dihydroxy-acid dehydratase (558 aa).

Cys-48 provides a ligand contact to [2Fe-2S] cluster. Position 80 (Asp-80) interacts with Mg(2+). Position 121 (Cys-121) interacts with [2Fe-2S] cluster. Mg(2+)-binding residues include Asp-122 and Lys-123. Lys-123 is modified (N6-carboxylysine). Residue Cys-193 coordinates [2Fe-2S] cluster. A Mg(2+)-binding site is contributed by Glu-445. Ser-471 (proton acceptor) is an active-site residue.

This sequence belongs to the IlvD/Edd family. In terms of assembly, homodimer. The cofactor is [2Fe-2S] cluster. Requires Mg(2+) as cofactor.

It carries out the reaction (2R)-2,3-dihydroxy-3-methylbutanoate = 3-methyl-2-oxobutanoate + H2O. It catalyses the reaction (2R,3R)-2,3-dihydroxy-3-methylpentanoate = (S)-3-methyl-2-oxopentanoate + H2O. It participates in amino-acid biosynthesis; L-isoleucine biosynthesis; L-isoleucine from 2-oxobutanoate: step 3/4. Its pathway is amino-acid biosynthesis; L-valine biosynthesis; L-valine from pyruvate: step 3/4. In terms of biological role, functions in the biosynthesis of branched-chain amino acids. Catalyzes the dehydration of (2R,3R)-2,3-dihydroxy-3-methylpentanoate (2,3-dihydroxy-3-methylvalerate) into 2-oxo-3-methylpentanoate (2-oxo-3-methylvalerate) and of (2R)-2,3-dihydroxy-3-methylbutanoate (2,3-dihydroxyisovalerate) into 2-oxo-3-methylbutanoate (2-oxoisovalerate), the penultimate precursor to L-isoleucine and L-valine, respectively. This Prochlorococcus marinus (strain SARG / CCMP1375 / SS120) protein is Dihydroxy-acid dehydratase.